A 330-amino-acid polypeptide reads, in one-letter code: Pseudouridine-5'-phosphate glycosidase (330 aa).

Catalysis depends on Glu50, which acts as the Proton donor. Substrate-binding residues include Lys112 and Val132. Residue Asp164 coordinates Mn(2+). 166 to 168 (SSD) is a substrate binding site. Lys185 acts as the Nucleophile in catalysis.

Belongs to the pseudouridine-5'-phosphate glycosidase family. Homotrimer. Requires Mn(2+) as cofactor.

The protein localises to the peroxisome. It catalyses the reaction D-ribose 5-phosphate + uracil = psi-UMP + H2O. Functionally, catalyzes the reversible cleavage of pseudouridine 5'-phosphate (PsiMP) to ribose 5-phosphate and uracil. Functions biologically in the cleavage direction, as part of a pseudouridine degradation pathway. Acts together with the pseudouridine kinase PUKI in the peroxisome to prevent toxic pseudouridine monophosphate accumulation. Can catalyze the formation of pseudouridine 5'-phosphate (reverse reaction) in vitro, with a catalytic efficiency 4 times lower than the hydrolysis reaction. This chain is Pseudouridine-5'-phosphate glycosidase, found in Arabidopsis thaliana (Mouse-ear cress).